The primary structure comprises 156 residues: MWKRIDHQLKIKAGDGPQAGQFKELGPGREPAVPHPLSLSEFQTVPVFEDISQHVKEVGSQLVKKVNAIFQLDITKDGKTVHQWTIDLKNGSGDTYRGPARLPADTVFTIPEPVFMELILGKMNPQKAFLAGKFKVSGKVLLGQKLERVFKDWAKW.

One can recognise an SCP2 domain in the interval 44–156 (TVPVFEDISQ…ERVFKDWAKW (113 aa)).

The polypeptide is SCP2 sterol-binding domain-containing protein 1 (SCP2D1) (Bos taurus (Bovine)).